A 189-amino-acid chain; its full sequence is Ras-like protein rasC (189 aa).

Residue 11-18 (GDGGVGKS) participates in GTP binding. Residues 33-41 (YDPTIENSY) carry the Effector region motif. GTP contacts are provided by residues 58-62 (DTAGQ) and 117-120 (NKAD). Cys186 bears the Cysteine methyl ester mark. The S-geranylgeranyl cysteine moiety is linked to residue Cys186. Residues 187–189 (IIL) constitute a propeptide, removed in mature form.

It belongs to the small GTPase superfamily. Ras family.

It localises to the cell membrane. The enzyme catalyses GTP + H2O = GDP + phosphate + H(+). With respect to regulation, alternates between an inactive form bound to GDP and an active form bound to GTP. Activated by a guanine nucleotide-exchange factor (GEF) and inactivated by a GTPase-activating protein (GAP). In terms of biological role, ras proteins bind GDP/GTP and possess intrinsic GTPase activity. This chain is Ras-like protein rasC (rasC), found in Dictyostelium discoideum (Social amoeba).